We begin with the raw amino-acid sequence, 408 residues long: LL-diaminopimelate aminotransferase (408 aa).

Substrate contacts are provided by tyrosine 15 and glycine 42. Residues tyrosine 72, 108 to 109, tyrosine 132, asparagine 187, tyrosine 218, and 246 to 248 contribute to the pyridoxal 5'-phosphate site; these read SK and SFS. 3 residues coordinate substrate: lysine 109, tyrosine 132, and asparagine 187. Lysine 249 is subject to N6-(pyridoxal phosphate)lysine. Pyridoxal 5'-phosphate is bound by residues arginine 257 and asparagine 292. Residues asparagine 292 and arginine 388 each contribute to the substrate site.

It belongs to the class-I pyridoxal-phosphate-dependent aminotransferase family. LL-diaminopimelate aminotransferase subfamily. In terms of assembly, homodimer. The cofactor is pyridoxal 5'-phosphate.

The enzyme catalyses (2S,6S)-2,6-diaminopimelate + 2-oxoglutarate = (S)-2,3,4,5-tetrahydrodipicolinate + L-glutamate + H2O + H(+). It participates in amino-acid biosynthesis; L-lysine biosynthesis via DAP pathway; LL-2,6-diaminopimelate from (S)-tetrahydrodipicolinate (aminotransferase route): step 1/1. Its function is as follows. Involved in the synthesis of meso-diaminopimelate (m-DAP or DL-DAP), required for both lysine and peptidoglycan biosynthesis. Catalyzes the direct conversion of tetrahydrodipicolinate to LL-diaminopimelate. Is also able to catalyze the reverse reaction in vitro, i.e. the transamination of LL-diaminopimelate with 2-oxoglutarate to produce tetrahydrodipicolinate and glutamate. Cannot use m-DAP, lysine or ornithine as the amino-group donor, when using 2-oxoglutarate as the amino-group acceptor. Cannot use pyruvate, indole 3-pyruvate, oxaloacetate or phenyl pyruvate as the amino-group acceptor, when using LL-DAP as the amino-group donor. In Leptospira interrogans serogroup Icterohaemorrhagiae serovar copenhageni (strain Fiocruz L1-130), this protein is LL-diaminopimelate aminotransferase.